The primary structure comprises 449 residues: Sensor protein QseC (449 aa).

At 1–12 (MKLTQRLSLRVR) the chain is on the cytoplasmic side. The helical transmembrane segment at 13–33 (LTLIFLILVSITWAISSFVAW) threads the bilayer. Residues 34 to 161 (RKTTDNVDEL…REDMALAIVA (128 aa)) lie on the Periplasmic side of the membrane. A helical membrane pass occupies residues 162–182 (AQLTPWLIALPFMLLILLLLL). One can recognise an HAMP domain in the interval 183 to 235 (HRELRPLKKLAQALRFRSPESETPLDAKGVPSEVRPLVEALNQLFSRIHSMMV). The Cytoplasmic portion of the chain corresponds to 183-449 (HRELRPLKKL…EGGFEAVVSW (267 aa)). The 207-residue stretch at 243-449 (DAAHELRSPL…EGGFEAVVSW (207 aa)) folds into the Histidine kinase domain. A Phosphohistidine; by autocatalysis modification is found at histidine 246.

It localises to the cell inner membrane. It catalyses the reaction ATP + protein L-histidine = ADP + protein N-phospho-L-histidine.. Member of a two-component regulatory system QseB/QseC. Activates the flagella regulon by activating transcription of FlhDC. May activate QseB by phosphorylation. The polypeptide is Sensor protein QseC (qseC) (Salmonella typhimurium (strain LT2 / SGSC1412 / ATCC 700720)).